The chain runs to 876 residues: Alanine--tRNA ligase (876 aa).

Zn(2+) is bound by residues His568, His572, Cys670, and His674.

Belongs to the class-II aminoacyl-tRNA synthetase family. It depends on Zn(2+) as a cofactor.

The protein localises to the cytoplasm. It carries out the reaction tRNA(Ala) + L-alanine + ATP = L-alanyl-tRNA(Ala) + AMP + diphosphate. Its function is as follows. Catalyzes the attachment of alanine to tRNA(Ala) in a two-step reaction: alanine is first activated by ATP to form Ala-AMP and then transferred to the acceptor end of tRNA(Ala). Also edits incorrectly charged Ser-tRNA(Ala) and Gly-tRNA(Ala) via its editing domain. This Anaplasma phagocytophilum (strain HZ) protein is Alanine--tRNA ligase.